Here is a 223-residue protein sequence, read N- to C-terminus: Acetate CoA-transferase subunit beta (223 aa).

E46 is a catalytic residue.

The protein belongs to the 3-oxoacid CoA-transferase subunit B family. Heterotetramer composed of two alpha subunits (AtoD) and two beta subunits (AtoA).

The enzyme catalyses an acyl-CoA + acetate = a carboxylate + acetyl-CoA. It catalyses the reaction acetoacetate + acetyl-CoA = acetoacetyl-CoA + acetate. The protein operates within lipid metabolism; short-chain fatty acid metabolism. In terms of biological role, coenzyme A transferase which is involved in short-chain fatty acid degradation and catalyzes the activation of short-chain fatty acids to their respective CoA thiolesters. This is Acetate CoA-transferase subunit beta (atoA) from Haemophilus influenzae (strain ATCC 51907 / DSM 11121 / KW20 / Rd).